We begin with the raw amino-acid sequence, 545 residues long: T-complex protein 1 subunit gamma (545 aa).

Met1 carries the post-translational modification N-acetylmethionine. The disordered stretch occupies residues 1–24; sequence MMGHRPVLVLSQNTKRESGRKVQS. Ser11 carries the phosphoserine modification. Residue Lys15 forms a Glycyl lysine isopeptide (Lys-Gly) (interchain with G-Cter in SUMO2) linkage. Gly42 contacts ADP. Position 42 (Gly42) interacts with ATP. Asp93 lines the Mg(2+) pocket. Residues Gly94, Thr95, Thr96, Ser97, Thr162, and Lys163 each coordinate ADP. ATP is bound by residues Gly94, Thr95, and Thr96. Position 170 is a phosphoserine (Ser170). The residue at position 222 (Lys222) is an N6-acetyllysine. Phosphoserine occurs at positions 243 and 244. At Tyr247 the chain carries Phosphotyrosine. Glycyl lysine isopeptide (Lys-Gly) (interchain with G-Cter in SUMO2) cross-links involve residues Lys248 and Lys249. The residue at position 252 (Ser252) is a Phosphoserine. An intrachain disulfide couples Cys366 to Cys372. Residue Lys381 forms a Glycyl lysine isopeptide (Lys-Gly) (interchain with G-Cter in SUMO2) linkage. Residue Gly411 coordinates ADP. Gly411 serves as a coordination point for ATP. Thr430 and Thr459 each carry phosphothreonine. Residues Gly482, Glu483, Glu497, and Lys502 each coordinate ADP. Position 482 (Gly482) interacts with ATP. Residue Glu497 participates in ATP binding. The disordered stretch occupies residues 526-545; sequence HKKKGDDQSRQGGAPDAGQE.

This sequence belongs to the TCP-1 chaperonin family. Component of the chaperonin-containing T-complex (TRiC), a hexadecamer composed of two identical back-to-back stacked rings enclosing a protein folding chamber. Each ring is made up of eight different subunits: TCP1/CCT1, CCT2, CCT3, CCT4, CCT5, CCT6A/CCT6, CCT7, CCT8. Interacts with PACRG. Interacts with DNAAF4. Interacts with DLEC1.

It localises to the cytoplasm. The enzyme catalyses ATP + H2O = ADP + phosphate + H(+). Its function is as follows. Component of the chaperonin-containing T-complex (TRiC), a molecular chaperone complex that assists the folding of actin, tubulin and other proteins upon ATP hydrolysis. The TRiC complex mediates the folding of WRAP53/TCAB1, thereby regulating telomere maintenance. As part of the TRiC complex may play a role in the assembly of BBSome, a complex involved in ciliogenesis regulating transports vesicles to the cilia. This Pongo abelii (Sumatran orangutan) protein is T-complex protein 1 subunit gamma (CCT3).